Consider the following 193-residue polypeptide: Probable nicotinate-nucleotide adenylyltransferase (193 aa).

This sequence belongs to the NadD family.

The enzyme catalyses nicotinate beta-D-ribonucleotide + ATP + H(+) = deamido-NAD(+) + diphosphate. Its pathway is cofactor biosynthesis; NAD(+) biosynthesis; deamido-NAD(+) from nicotinate D-ribonucleotide: step 1/1. Catalyzes the reversible adenylation of nicotinate mononucleotide (NaMN) to nicotinic acid adenine dinucleotide (NaAD). This Endomicrobium trichonymphae protein is Probable nicotinate-nucleotide adenylyltransferase.